We begin with the raw amino-acid sequence, 287 residues long: Xyloglucan endotransglucosylase protein 1 (287 aa).

A signal peptide spans 1–28 (MAFMSFINGFSTLFLVALLASSMMAAKG). The 191-residue stretch at 29–219 (GNFYQDFDVT…WTKAPFTAYY (191 aa)) folds into the GH16 domain. Glu-105 acts as the Nucleophile in catalysis. The Proton donor role is filled by Glu-109. Residue Glu-109 coordinates xyloglucan. Asn-113 is a glycosylation site (N-linked (GlcNAc...) asparagine). Residues 122 to 124 (HTN), 132 to 134 (NRE), 198 to 199 (DW), and Gly-203 contribute to the xyloglucan site. Intrachain disulfides connect Cys-227–Cys-231 and Cys-266–Cys-280. Arg-271 is a xyloglucan binding site.

It belongs to the glycosyl hydrolase 16 family. XTH group 2 subfamily. Contains at least one intrachain disulfide bond essential for its enzymatic activity. As to expression, expressed in fruit pulp. Expressed in leaves, flowers, calyces, stems and fruits. Highest expression in leaves and lowest in fruits.

Its subcellular location is the secreted. It localises to the cell wall. It is found in the extracellular space. The protein localises to the apoplast. It catalyses the reaction breaks a beta-(1-&gt;4) bond in the backbone of a xyloglucan and transfers the xyloglucanyl segment on to O-4 of the non-reducing terminal glucose residue of an acceptor, which can be a xyloglucan or an oligosaccharide of xyloglucan.. Catalyzes xyloglucan endotransglycosylation (XET). Cleaves and religates xyloglucan polymers. Does not catalyze xyloglucan endohydrolysis (XEH). Overexpression in Arabidopsis transgenic plants results in elevated tolerance to abiotic stress, such as salt, ABA (abscisic acid) and drought stresses, and in the production of wider leaves. Overexpression in transgenic tomato plants slows down fruit ripening and softening, and the plants produce larger fruits. Both transgenic plants have larger and more irregular cells. Moreover, the fruits of the transgenic tomato have higher density of cell wall and intercellular spaces. May provide cells with more strength and thickness to maintain structural integrity. Probably involved in cell wall assembly and synthesis in fast growing tissues and in the maintenance of firmness in mature fruits. This is Xyloglucan endotransglucosylase protein 1 from Diospyros kaki (Kaki persimmon).